We begin with the raw amino-acid sequence, 234 residues long: MTILILTDNVHAHALAVDLQARHGDMDVYQSPIGQLPGVPRCDVAERVAEIVERYDLVLSFHCKQRFPAALIDGVRCVNVHPGFNPYNRGWFPQVFSIIDGQKVGVTIHEIDDQLDHGPIIAQRECAIESWDSSGSVYARLMDIERELVLEHFDAIRDGSYTAKSPATEGNLNLKKDFEQLRRLDLNERGTFGHFLNRLRALTHDDFRNAWFVDASGRKVFVRVVLEPEKPAEA.

Residues Asn-9 and 62–64 each bind dTDP-4-amino-4,6-dideoxy-alpha-D-glucose; that span reads HCK. Position 65 to 67 (65 to 67) interacts with (6R)-10-formyltetrahydrofolate; the sequence is QRF. His-81 (proton acceptor) is an active-site residue. A dTDP-4-amino-4,6-dideoxy-alpha-D-glucose-binding site is contributed by 90 to 94; it reads GWFPQ. Residues Asp-112, Asp-116, and Lys-175 each coordinate (6R)-10-formyltetrahydrofolate. A dTDP-4-amino-4,6-dideoxy-alpha-D-glucose-binding site is contributed by Asn-209.

The protein belongs to the dTDP-Qui4N formyltransferase family. In terms of assembly, homodimer.

The enzyme catalyses dTDP-4-amino-4,6-dideoxy-alpha-D-glucose + (6R)-10-formyltetrahydrofolate = dTDP-4-formamido-4,6-dideoxy-alpha-D-glucose + (6S)-5,6,7,8-tetrahydrofolate + H(+). In terms of biological role, sugar N-formyltransferase that catalyzes the conversion of dTDP-4-amino-4,6-dideoxyglucose into dTDP-4-formamido-4,6-dideoxyglucose using N(10)-formyltetrahydrofolate as the carbon source. Plays a role in virulence. The protein is dTDP-4-amino-4,6-dideoxyglucose formyltransferase of Mycobacterium bovis (strain ATCC BAA-935 / AF2122/97).